The primary structure comprises 970 residues: GEM-interacting protein (970 aa).

A Phosphoserine modification is found at Ser19. Disordered stretches follow at residues 44-76 (PLLS…EGPV), 224-263 (SEDL…AQAK), and 377-478 (PLDI…ENGL). Polar residues predominate over residues 56–65 (PTATVTNEAS). A phosphoserine mark is found at Ser71, Ser231, Ser234, Ser243, Ser437, and Ser441. The 264-residue stretch at 81–344 (EELDLRLIRT…CCAPFEPGQR (264 aa)) folds into the F-BAR domain. A compositionally biased stretch (polar residues) spans 231–246 (SQGSPEDSAPQASPGP). Residues 459–472 (SSDDFEERDPDLGD) show a composition bias toward acidic residues. The segment at 493–537 (THQLRRLRGPAKCRECEAFMVSGTECEECFLTCHKRCLETLLILC) adopts a Phorbol-ester/DAG-type zinc-finger fold. Residues 554–757 (LQLPRDFPEE…FLIVHYEQIF (204 aa)) form the Rho-GAP domain. A Phosphothreonine modification is found at Thr660. The interval 762-878 (LPQATEPPPQ…PVKYPRGGVR (117 aa)) is disordered. Residues 766-778 (TEPPPQDSSPAPG) show a composition bias toward pro residues. Residues 815–830 (EQHPTATPTEIPTPQS) are compositionally biased toward polar residues. Basic and acidic residues predominate over residues 831-844 (DQREDVAEDTKDGG). The segment covering 847–863 (VSSQGPEDSLLGTQSRG) has biased composition (polar residues). A phosphoserine mark is found at Ser885, Ser907, Ser914, Ser919, and Ser923. Residues 897–932 (ETPITSVPRGSLRGRGPSPAAASPEGSPLRRTPLPK) form a disordered region. A compositionally biased stretch (low complexity) spans 910 to 923 (GRGPSPAAASPEGS).

In terms of assembly, interacts with GEM through its N-terminal.

Stimulates, in vitro and in vivo, the GTPase activity of RhoA. This Homo sapiens (Human) protein is GEM-interacting protein (GMIP).